We begin with the raw amino-acid sequence, 609 residues long: UvrABC system protein C (609 aa).

Residues 16-94 (SSAGVYRMYD…IKQYMPKYNV (79 aa)) form the GIY-YIG domain. Residues 203-238 (QQVISTLVAKMEQAAQQQEYEQAARFRDQIMALRKV) form the UVR domain.

This sequence belongs to the UvrC family. As to quaternary structure, interacts with UvrB in an incision complex.

The protein resides in the cytoplasm. Functionally, the UvrABC repair system catalyzes the recognition and processing of DNA lesions. UvrC both incises the 5' and 3' sides of the lesion. The N-terminal half is responsible for the 3' incision and the C-terminal half is responsible for the 5' incision. This is UvrABC system protein C from Shewanella putrefaciens (strain CN-32 / ATCC BAA-453).